The chain runs to 101 residues: Urease subunit beta (101 aa).

This sequence belongs to the urease beta subunit family. As to quaternary structure, heterotrimer of UreA (gamma), UreB (beta) and UreC (alpha) subunits. Three heterotrimers associate to form the active enzyme.

The protein resides in the cytoplasm. It catalyses the reaction urea + 2 H2O + H(+) = hydrogencarbonate + 2 NH4(+). Its pathway is nitrogen metabolism; urea degradation; CO(2) and NH(3) from urea (urease route): step 1/1. This chain is Urease subunit beta, found in Leptothrix cholodnii (strain ATCC 51168 / LMG 8142 / SP-6) (Leptothrix discophora (strain SP-6)).